A 388-amino-acid polypeptide reads, in one-letter code: Phosphopentomutase (388 aa).

6 residues coordinate Mn(2+): Asp10, Asp282, His287, Asp323, His324, and His335.

Belongs to the phosphopentomutase family. Mn(2+) serves as cofactor.

It localises to the cytoplasm. The catalysed reaction is 2-deoxy-alpha-D-ribose 1-phosphate = 2-deoxy-D-ribose 5-phosphate. It carries out the reaction alpha-D-ribose 1-phosphate = D-ribose 5-phosphate. The protein operates within carbohydrate degradation; 2-deoxy-D-ribose 1-phosphate degradation; D-glyceraldehyde 3-phosphate and acetaldehyde from 2-deoxy-alpha-D-ribose 1-phosphate: step 1/2. Isomerase that catalyzes the conversion of deoxy-ribose 1-phosphate (dRib-1-P) and ribose 1-phosphate (Rib-1-P) to deoxy-ribose 5-phosphate (dRib-5-P) and ribose 5-phosphate (Rib-5-P), respectively. This chain is Phosphopentomutase, found in Acetivibrio thermocellus (strain ATCC 27405 / DSM 1237 / JCM 9322 / NBRC 103400 / NCIMB 10682 / NRRL B-4536 / VPI 7372) (Clostridium thermocellum).